The following is an 826-amino-acid chain: Lon protease (826 aa).

Residues 1–20 (MSEEELNNRDTESKQEHDEN) show a composition bias toward basic and acidic residues. The segment at 1-27 (MSEEELNNRDTESKQEHDENNSNFEAG) is disordered. In terms of domain architecture, Lon N-terminal spans 33–231 (LPVLPLREVI…KVHALLEKEL (199 aa)). 384–391 (GPPGVGKT) lines the ATP pocket. Positions 620–801 (ENLVGMTTGL…SEALTFTLAE (182 aa)) constitute a Lon proteolytic domain. Active-site residues include serine 707 and lysine 750.

The protein belongs to the peptidase S16 family. In terms of assembly, homohexamer. Organized in a ring with a central cavity.

It is found in the cytoplasm. The catalysed reaction is Hydrolysis of proteins in presence of ATP.. Functionally, ATP-dependent serine protease that mediates the selective degradation of mutant and abnormal proteins as well as certain short-lived regulatory proteins. Required for cellular homeostasis and for survival from DNA damage and developmental changes induced by stress. Degrades polypeptides processively to yield small peptide fragments that are 5 to 10 amino acids long. Binds to DNA in a double-stranded, site-specific manner. The polypeptide is Lon protease (Neorickettsia sennetsu (strain ATCC VR-367 / Miyayama) (Ehrlichia sennetsu)).